We begin with the raw amino-acid sequence, 1675 residues long: Clathrin heavy chain 1 (1675 aa).

Ala2 carries the N-acetylalanine modification. The globular terminal domain stretch occupies residues 2–479 (AQILPIRFQE…VDPTLALSVY (478 aa)). WD40-like repeat regions lie at residues 24-67 (NIGF…RPIS), 68-107 (ADSA…MTDD), 108-149 (VTFW…SSLA), 150-195 (GCQI…QPIE), 196-257 (GHAA…PEAQ), 258-301 (NDFP…ISGE), and 302-330 (TIFV…VCVE). A Phosphoserine modification is found at Ser67. Phosphothreonine is present on Thr105. At Tyr184 the chain carries Phosphotyrosine. Thr394 is modified (phosphothreonine). A binding site for the uncoating ATPase, involved in lattice disassembly region spans residues 449-465 (EKWLKEDKLECSEELGD). A flexible linker region spans residues 480-523 (LRANVPNKVIQCFAETGQVQKIVLYAKKVGYTPDWIFLLRNVMR). A distal segment region spans residues 524-634 (ISPDQGQQFA…RALEHFTDLY (111 aa)). The interval 524–1675 (ISPDQGQQFA…QPQPGFGYSM (1152 aa)) is heavy chain arm. 7 CHCR repeats span residues 537–683 (VQDE…QICV), 686–828 (ASKY…SEDV), 833–972 (ILVV…PLID), 979–1124 (LSET…VKEA), 1128–1269 (YIKA…FRLA), 1274–1420 (LHIV…LLLN), and 1423–1566 (LMVL…RECF). Tyr634 carries the post-translational modification Phosphotyrosine. The segment at 639–1675 (AVVHTHLLNP…QPQPGFGYSM (1037 aa)) is proximal segment. Lys737 carries the N6-succinyllysine modification. Residue Lys856 is modified to N6-acetyllysine. Tyr899 carries the phosphotyrosine modification. Ser1167 is subject to Phosphoserine. Phosphotyrosine is present on Tyr1206. The interval 1213-1522 (AAKLLYNNVS…YLFKGNNRWK (310 aa)) is involved in binding clathrin light chain. A Phosphoserine modification is found at Ser1229. Lys1441 carries the post-translational modification N6-acetyllysine; alternate. Lys1441 bears the N6-succinyllysine; alternate mark. A phosphotyrosine mark is found at Tyr1477 and Tyr1487. Ser1494 bears the Phosphoserine mark. At Lys1501 the chain carries N6-acetyllysine. The segment at 1550–1675 (AEELLQWFLQ…QPQPGFGYSM (126 aa)) is trimerization.

It belongs to the clathrin heavy chain family. Clathrin triskelions, composed of 3 heavy chains and 3 light chains, are the basic subunits of the clathrin coat. In the presence of light chains, hub assembly is influenced by both the pH and the concentration of calcium. Interacts with HIP1. Interacts with DENND1A, DENND1B and DENND1C. Interacts with OCRL. Interacts with ERBB2. Interacts with FKBP6. Interacts with CKAP5 and TACC3 forming the TACC3/ch-TOG/clathrin complex located at spindle inter-microtubules bridges; the complex implicates clathrin triskelions; TACC3 and CLTC are proposed to form a composite microtubule interaction surface. Interacts with ATG16L1 (via N-terminus). Interacts with RFTN1; the interaction occurs in response to pathogens. Interacts with TMEM106B (via N-terminus). Interacts with DNAJC6; this interaction produces a local change in heavy-chain contacts, creating a detectable global distortion of the clathrin coat and leads to the recruitment of HSPA8.

The protein resides in the cytoplasmic vesicle membrane. Its subcellular location is the membrane. The protein localises to the coated pit. It is found in the melanosome. It localises to the cytoplasm. The protein resides in the cytoskeleton. Its subcellular location is the spindle. In terms of biological role, clathrin is the major protein of the polyhedral coat of coated pits and vesicles. Two different adapter protein complexes link the clathrin lattice either to the plasma membrane or to the trans-Golgi network. Acts as a component of the TACC3/ch-TOG/clathrin complex proposed to contribute to stabilization of kinetochore fibers of the mitotic spindle by acting as inter-microtubule bridge. The TACC3/ch-TOG/clathrin complex is required for the maintenance of kinetochore fiber tension. Plays a role in early autophagosome formation. Interaction with DNAJC6 mediates the recruitment of HSPA8 to the clathrin lattice and creates local destabilization of the lattice promoting uncoating. This chain is Clathrin heavy chain 1, found in Bos taurus (Bovine).